The sequence spans 393 residues: MAAVTVEEIRKAQRADGPATVLAIGTATPANYVTQADYPDYYFRITKSEHMTDLKEKFKRMCDKSMIRKRYMHLTEEILKENPNMCAYMAPSLDARQDIVVVEVPKLGKEAAAKAIKEWGQPKSKITHLIFCTTSGVDMPGCDYQLTKLLGLRPSVKRFMMYQQGCFAGGTVLRLAKDLAENNRGARVLVVCSEITAVTFRGPVDTHLDSLVGQALFGDGAAAVIVGADPDESIERPLYQLVSAAQTILPDSDGAIDGHLREVGLTFHLLKDVPGLISKNIEKSLKEAFGPIGISDWNSIFWIAHPGGPAILDQVEEKLELKEEKLRATRHVLSEYGNMSSACVLFILDEMRKKCAEEGMATTGEGLEWGVLFGFGPGLTVETVVLRSVPIKA.

Cys-166 is an active-site residue.

This sequence belongs to the thiolase-like superfamily. Chalcone/stilbene synthases family.

The catalysed reaction is (E)-4-coumaroyl-CoA + 3 malonyl-CoA + 3 H(+) = 2',4,4',6'-tetrahydroxychalcone + 3 CO2 + 4 CoA. The protein operates within secondary metabolite biosynthesis; flavonoid biosynthesis. The primary product of this enzyme is 4,2',4',6'-tetrahydroxychalcone (also termed naringenin-chalcone or chalcone) which can under specific conditions spontaneously isomerize into naringenin. The sequence is that of Chalcone synthase 3 (CHS3) from Ruta graveolens (Common rue).